A 766-amino-acid chain; its full sequence is Sucrose synthase (766 aa).

A GT-B glycosyltransferase region spans residues 220–698 (MVFNVVILSV…GLLRIKERYT (479 aa)).

The protein belongs to the glycosyltransferase 1 family. Plant sucrose synthase subfamily. In terms of tissue distribution, expressed most predominantly in tap root.

It carries out the reaction an NDP-alpha-D-glucose + D-fructose = a ribonucleoside 5'-diphosphate + sucrose + H(+). Its function is as follows. Sucrose-cleaving enzyme that provides UDP-glucose and fructose for various metabolic pathways. The polypeptide is Sucrose synthase (SS1) (Beta vulgaris (Sugar beet)).